Consider the following 194-residue polypeptide: Exopolysaccharide II synthesis transcriptional activator ExpG (194 aa).

The HTH marR-type domain maps to Y49 to L184.

In terms of biological role, transcriptional activator of genes for galactoglucan synthesis (exopolysaccharide II or EPS II). The protein is Exopolysaccharide II synthesis transcriptional activator ExpG (expG) of Rhizobium meliloti (strain 1021) (Ensifer meliloti).